The following is an 838-amino-acid chain: Probable inorganic carbon transporter subunit DabA (838 aa).

Residues C353, D355, H537, and C552 each coordinate Zn(2+).

The protein belongs to the inorganic carbon transporter (TC 9.A.2) DabA family. Forms a complex with DabB. The cofactor is Zn(2+).

It is found in the cell membrane. Functionally, part of an energy-coupled inorganic carbon pump. The protein is Probable inorganic carbon transporter subunit DabA of Chloroflexus aurantiacus (strain ATCC 29366 / DSM 635 / J-10-fl).